We begin with the raw amino-acid sequence, 143 residues long: Peptidyl-prolyl cis-trans isomerase FKBP15-3 (143 aa).

The PPIase FKBP-type domain occupies 56–143; sequence GKRVSVHYTG…VFDVELLNVK (88 aa).

Belongs to the FKBP-type PPIase family.

The catalysed reaction is [protein]-peptidylproline (omega=180) = [protein]-peptidylproline (omega=0). Functionally, PPIases accelerate the folding of proteins. It catalyzes the cis-trans isomerization of proline imidic peptide bonds in oligopeptides. The protein is Peptidyl-prolyl cis-trans isomerase FKBP15-3 (FKBP15-3) of Arabidopsis thaliana (Mouse-ear cress).